The sequence spans 114 residues: Cytochrome c oxidase assembly protein cox16, mitochondrial (114 aa).

Residues proline 29–threonine 49 traverse the membrane as a helical segment.

The protein belongs to the COX16 family.

The protein localises to the mitochondrion inner membrane. Its function is as follows. Required for the assembly of the mitochondrial respiratory chain complex IV (CIV), also known as cytochrome c oxidase. May participate in merging the COX1 and COX2 assembly lines. This chain is Cytochrome c oxidase assembly protein cox16, mitochondrial (cox-9), found in Neurospora crassa (strain ATCC 24698 / 74-OR23-1A / CBS 708.71 / DSM 1257 / FGSC 987).